Here is a 107-residue protein sequence, read N- to C-terminus: Alpha-elapitoxin-Al2a (107 aa).

The N-terminal stretch at 1-21 (MKTLLLTLVVVTIVCLDLGDS) is a signal peptide. 5 cysteine pairs are disulfide-bonded: C24–C41, C34–C62, C47–C51, C66–C77, and C78–C83.

It belongs to the three-finger toxin family. Long-chain subfamily. Type II alpha-neurotoxin sub-subfamily. Expressed by the venom gland.

The protein localises to the secreted. Functionally, binds with high affinity to muscular (alpha-1/CHRNA1) and neuronal (alpha-7/CHRNA7) nicotinic acetylcholine receptor (nAChR) and inhibits acetylcholine from binding to the receptor, thereby impairing neuromuscular and neuronal transmission. The sequence is that of Alpha-elapitoxin-Al2a from Austrelaps labialis (Pygmy copperhead).